The sequence spans 352 residues: tRNA pseudouridine synthase D (352 aa).

Asp-81 serves as the catalytic Nucleophile. The TRUD domain maps to Gly-157–Leu-303.

It belongs to the pseudouridine synthase TruD family.

It catalyses the reaction uridine(13) in tRNA = pseudouridine(13) in tRNA. Functionally, responsible for synthesis of pseudouridine from uracil-13 in transfer RNAs. In Azotobacter vinelandii (strain DJ / ATCC BAA-1303), this protein is tRNA pseudouridine synthase D.